Consider the following 515-residue polypeptide: Fatty acyl-CoA reductase 1 (515 aa).

Residues 1–465 (MVSIPEYYEG…ARKHLNKLRN (465 aa)) lie on the Cytoplasmic side of the membrane. Positions 451–507 (SGLPAARKHLNKLRNIRYGFNTILVILIWRIFIARSQMARNIWYFVVSLCYKFLSYF) are necessary and sufficient for PEX19-mediated localization into peroxisome membrane. The chain crosses the membrane as a helical span at residues 466–483 (IRYGFNTILVILIWRIFI). At 484 to 515 (ARSQMARNIWYFVVSLCYKFLSYFRASSTMRY) the chain is on the peroxisomal side.

Belongs to the fatty acyl-CoA reductase family. Interacts with PEX19; PEX19 mediates the targeting of FAR1 to peroxisomes.

It localises to the peroxisome membrane. It carries out the reaction a long-chain fatty acyl-CoA + 2 NADPH + 2 H(+) = a long-chain primary fatty alcohol + 2 NADP(+) + CoA. The catalysed reaction is hexadecanoyl-CoA + 2 NADPH + 2 H(+) = hexadecan-1-ol + 2 NADP(+) + CoA. It catalyses the reaction octadecanoyl-CoA + 2 NADPH + 2 H(+) = octadecan-1-ol + 2 NADP(+) + CoA. The enzyme catalyses (9Z)-octadecenoyl-CoA + 2 NADPH + 2 H(+) = (9Z)-octadecen-1-ol + 2 NADP(+) + CoA. It carries out the reaction (9Z,12Z)-octadecadienoyl-CoA + 2 NADPH + 2 H(+) = (9Z,12Z)-octadecadien-1-ol + 2 NADP(+) + CoA. The catalysed reaction is eicosanoyl-CoA + 2 NADPH + 2 H(+) = eicosan-1-ol + 2 NADP(+) + CoA. It catalyses the reaction 16-methylheptadecanoyl-CoA + 2 NADPH + 2 H(+) = 16-methylheptadecan-1-ol + 2 NADP(+) + CoA. The enzyme catalyses 18-methylnonadecanoyl-CoA + 2 NADPH + 2 H(+) = 18-methylnonadecan-1-ol + 2 NADP(+) + CoA. Catalyzes the reduction of saturated and unsaturated C16 or C18 fatty acyl-CoA to fatty alcohols. It plays an essential role in the production of ether lipids/plasmalogens which synthesis requires fatty alcohols. In parallel, it is also required for wax monoesters production since fatty alcohols also constitute a substrate for their synthesis. The protein is Fatty acyl-CoA reductase 1 of Pongo abelii (Sumatran orangutan).